The chain runs to 420 residues: Histidine--tRNA ligase (420 aa).

This sequence belongs to the class-II aminoacyl-tRNA synthetase family. In terms of assembly, homodimer.

It localises to the cytoplasm. It carries out the reaction tRNA(His) + L-histidine + ATP = L-histidyl-tRNA(His) + AMP + diphosphate + H(+). In Saccharopolyspora erythraea (strain ATCC 11635 / DSM 40517 / JCM 4748 / NBRC 13426 / NCIMB 8594 / NRRL 2338), this protein is Histidine--tRNA ligase.